The primary structure comprises 277 residues: ATP synthase subunit delta (277 aa).

Belongs to the ATPase delta chain family. F-type ATPases have 2 components, F(1) - the catalytic core - and F(0) - the membrane proton channel. F(1) has five subunits: alpha(3), beta(3), gamma(1), delta(1), epsilon(1). F(0) has three main subunits: a(1), b(2) and c(10-14). The alpha and beta chains form an alternating ring which encloses part of the gamma chain. F(1) is attached to F(0) by a central stalk formed by the gamma and epsilon chains, while a peripheral stalk is formed by the delta and b chains.

It is found in the cell membrane. Functionally, f(1)F(0) ATP synthase produces ATP from ADP in the presence of a proton or sodium gradient. F-type ATPases consist of two structural domains, F(1) containing the extramembraneous catalytic core and F(0) containing the membrane proton channel, linked together by a central stalk and a peripheral stalk. During catalysis, ATP synthesis in the catalytic domain of F(1) is coupled via a rotary mechanism of the central stalk subunits to proton translocation. In terms of biological role, this protein is part of the stalk that links CF(0) to CF(1). It either transmits conformational changes from CF(0) to CF(1) or is implicated in proton conduction. This is ATP synthase subunit delta from Frankia alni (strain DSM 45986 / CECT 9034 / ACN14a).